The primary structure comprises 402 residues: uncharacterized protein (402 aa).

This sequence belongs to the peptidase M20 family.

This is an uncharacterized protein from Sinorhizobium fredii (strain NBRC 101917 / NGR234).